The following is a 91-amino-acid chain: Small ribosomal subunit protein bS20 (91 aa).

Residues 1 to 21 (MPLHKSAEKRLRQSARRNERN) are compositionally biased toward basic and acidic residues. Disordered regions lie at residues 1–25 (MPLH…RARK) and 71–91 (NKAS…AQKD).

Belongs to the bacterial ribosomal protein bS20 family.

Functionally, binds directly to 16S ribosomal RNA. This chain is Small ribosomal subunit protein bS20, found in Prosthecochloris aestuarii (strain DSM 271 / SK 413).